Here is a 442-residue protein sequence, read N- to C-terminus: Ribosomal protein uS12 methylthiotransferase RimO (442 aa).

Residues 9-119 enclose the MTTase N-terminal domain; that stretch reads PRIGFVSLGC…VLSHVHQYVP (111 aa). Cysteine 18, cysteine 54, cysteine 83, cysteine 151, cysteine 155, and cysteine 158 together coordinate [4Fe-4S] cluster. Positions 137–375 constitute a Radical SAM core domain; that stretch reads LTPRHYAYLK…QLQQAISTQR (239 aa). Residues 377-442 enclose the TRAM domain; the sequence is QDKIGREVLV…DEYDLWGSRV (66 aa).

It belongs to the methylthiotransferase family. RimO subfamily. [4Fe-4S] cluster is required as a cofactor.

The protein localises to the cytoplasm. The catalysed reaction is L-aspartate(89)-[ribosomal protein uS12]-hydrogen + (sulfur carrier)-SH + AH2 + 2 S-adenosyl-L-methionine = 3-methylsulfanyl-L-aspartate(89)-[ribosomal protein uS12]-hydrogen + (sulfur carrier)-H + 5'-deoxyadenosine + L-methionine + A + S-adenosyl-L-homocysteine + 2 H(+). Its function is as follows. Catalyzes the methylthiolation of an aspartic acid residue of ribosomal protein uS12. This Pectobacterium atrosepticum (strain SCRI 1043 / ATCC BAA-672) (Erwinia carotovora subsp. atroseptica) protein is Ribosomal protein uS12 methylthiotransferase RimO.